Here is a 390-residue protein sequence, read N- to C-terminus: Type II methyltransferase M.SacI (390 aa).

Residues 5–371 (LPVISLFSGA…RALMEQLGYL (367 aa)) enclose the SAM-dependent MTase C5-type domain. Cys-96 is a catalytic residue.

The protein belongs to the class I-like SAM-binding methyltransferase superfamily. C5-methyltransferase family.

It carries out the reaction a 2'-deoxycytidine in DNA + S-adenosyl-L-methionine = a 5-methyl-2'-deoxycytidine in DNA + S-adenosyl-L-homocysteine + H(+). In terms of biological role, a beta methylase recognizes the double-stranded sequence 5'-GAGCTC-3', methylates C-4 on both strands, and protects the DNA from cleavage by the SacI endonuclease. The polypeptide is Type II methyltransferase M.SacI (Streptomyces achromogenes).